Here is a 500-residue protein sequence, read N- to C-terminus: Envelop protein OPG153 (500 aa).

C43 and C342 are disulfide-bonded.

Belongs to the orthopoxvirus OPG153 protein family. In terms of assembly, interacts with proteins OPG094 and OPG143. Interacts with OPG154. Interacts with OPG152. Interacts with host laminin.

It localises to the virion membrane. In terms of biological role, envelop protein that mediates acid-dependent endocytosis into host cells. Plays an important role in endocytic entry of the virus by acting as an acid-sensitive membrane fusion suppressor. Low pH in host endosomes triggers conformational changes to allow de-repression of viral fusion complex activity and membrane fusion within vesicles. Also plays a role in bridging the mature virion with structural protein OPG152. This is Envelop protein OPG153 (OPG153) from Vaccinia virus (strain Western Reserve) (VACV).